We begin with the raw amino-acid sequence, 229 residues long: MIQVKICGITNKNEIKYLNILKPEYMGFVFTKSKRQVTVREAKQLSNNLDKQIKIVGVFKDNSIDEILDVINILPLNIIQLHGKEDENFISSLKARVEKSVSIWKALSISDAENIRKYADHKYRDSIDNILIDGDKPGSGETFPLEDICELLKVDSNKENNCNLTNNTCSFFLAGGITPENVAERIVKVSPYGIDVSSGIEITNEDGTRTKSFEKMRSLIEKVRAININ.

It belongs to the TrpF family.

It catalyses the reaction N-(5-phospho-beta-D-ribosyl)anthranilate = 1-(2-carboxyphenylamino)-1-deoxy-D-ribulose 5-phosphate. Its pathway is amino-acid biosynthesis; L-tryptophan biosynthesis; L-tryptophan from chorismate: step 3/5. This chain is N-(5'-phosphoribosyl)anthranilate isomerase, found in Clostridium beijerinckii (strain ATCC 51743 / NCIMB 8052) (Clostridium acetobutylicum).